A 71-amino-acid polypeptide reads, in one-letter code: Sec-independent protein translocase protein TatA (71 aa).

The helical transmembrane segment at 1–21 threads the bilayer; it reads MGSFSLLHWLVVLVIVLLVFG. Residues 43–71 are disordered; it reads LREDDKPTDQLGSTSQSTASGPQQDHGKH. Residues 52–65 show a composition bias toward polar residues; sequence QLGSTSQSTASGPQ.

The protein belongs to the TatA/E family. As to quaternary structure, the Tat system comprises two distinct complexes: a TatABC complex, containing multiple copies of TatA, TatB and TatC subunits, and a separate TatA complex, containing only TatA subunits. Substrates initially bind to the TatABC complex, which probably triggers association of the separate TatA complex to form the active translocon.

The protein resides in the cell inner membrane. Functionally, part of the twin-arginine translocation (Tat) system that transports large folded proteins containing a characteristic twin-arginine motif in their signal peptide across membranes. TatA could form the protein-conducting channel of the Tat system. This is Sec-independent protein translocase protein TatA from Xylella fastidiosa (strain 9a5c).